The sequence spans 757 residues: Polyribonucleotide nucleotidyltransferase (757 aa).

2 residues coordinate Mg(2+): D532 and D538. In terms of domain architecture, KH spans P598 to I657. In terms of domain architecture, S1 motif spans G669–V738.

This sequence belongs to the polyribonucleotide nucleotidyltransferase family. Mg(2+) serves as cofactor.

Its subcellular location is the cytoplasm. It carries out the reaction RNA(n+1) + phosphate = RNA(n) + a ribonucleoside 5'-diphosphate. Involved in mRNA degradation. Catalyzes the phosphorolysis of single-stranded polyribonucleotides processively in the 3'- to 5'-direction. This chain is Polyribonucleotide nucleotidyltransferase, found in Rhodococcus jostii (strain RHA1).